Reading from the N-terminus, the 1661-residue chain is Pentafunctional AROM polypeptide (1661 aa).

The segment at 1–388 (MATNGVKAEP…YEKKASSVVD (388 aa)) is 3-dehydroquinate synthase. NAD(+)-binding positions include 50–52 (DTN), 87–90 (ETSK), 118–120 (GGV), and Asp123. A 7-phospho-2-dehydro-3-deoxy-D-arabino-heptonate-binding site is contributed by Arg134. Position 143 to 144 (143 to 144 (TT)) interacts with NAD(+). Asp150 and Lys156 together coordinate 7-phospho-2-dehydro-3-deoxy-D-arabino-heptonate. Lys165 provides a ligand contact to NAD(+). Asn166 serves as a coordination point for 7-phospho-2-dehydro-3-deoxy-D-arabino-heptonate. Residues 183–186 (FLET) and Asn194 contribute to the NAD(+) site. A Zn(2+)-binding site is contributed by Glu198. Residues 198-201 (EVVK) and Lys254 contribute to the 7-phospho-2-dehydro-3-deoxy-D-arabino-heptonate site. The active-site Proton acceptor; for 3-dehydroquinate synthase activity is Glu264. 7-phospho-2-dehydro-3-deoxy-D-arabino-heptonate-binding positions include 268–272 (RNLLN) and His275. Residue His275 participates in Zn(2+) binding. The active-site Proton acceptor; for 3-dehydroquinate synthase activity is the His279. 7-phospho-2-dehydro-3-deoxy-D-arabino-heptonate-binding residues include His291 and Lys360. His291 is a Zn(2+) binding site. Residues 401-850 (VHPGIPSDLN…WDILNQQFKA (450 aa)) form an EPSP synthase region. Residue Cys832 is the For EPSP synthase activity of the active site. The segment at 872–1064 (QKSIFIIGMR…KKKKQSFFVC (193 aa)) is shikimate kinase. 879-886 (GMRGAGKT) is an ATP binding site. The segment at 1065–1285 (LSAPNLEPCA…TAPGQLSAAD (221 aa)) is 3-dehydroquinase. The active-site Proton acceptor; for 3-dehydroquinate dehydratase activity is the His1188. Lys1216 acts as the Schiff-base intermediate with substrate; for 3-dehydroquinate dehydratase activity in catalysis. The shikimate dehydrogenase stretch occupies residues 1298–1661 (TKKFCIFGSP…LTYSWSLGDW (364 aa)).

The protein in the N-terminal section; belongs to the sugar phosphate cyclases superfamily. Dehydroquinate synthase family. It in the 2nd section; belongs to the EPSP synthase family. In the 3rd section; belongs to the shikimate kinase family. This sequence in the 4th section; belongs to the type-I 3-dehydroquinase family. The protein in the C-terminal section; belongs to the shikimate dehydrogenase family. As to quaternary structure, homodimer. Zn(2+) is required as a cofactor.

It localises to the cytoplasm. It catalyses the reaction 7-phospho-2-dehydro-3-deoxy-D-arabino-heptonate = 3-dehydroquinate + phosphate. It carries out the reaction 3-dehydroquinate = 3-dehydroshikimate + H2O. The catalysed reaction is shikimate + NADP(+) = 3-dehydroshikimate + NADPH + H(+). The enzyme catalyses shikimate + ATP = 3-phosphoshikimate + ADP + H(+). It catalyses the reaction 3-phosphoshikimate + phosphoenolpyruvate = 5-O-(1-carboxyvinyl)-3-phosphoshikimate + phosphate. It participates in metabolic intermediate biosynthesis; chorismate biosynthesis; chorismate from D-erythrose 4-phosphate and phosphoenolpyruvate: step 2/7. Its pathway is metabolic intermediate biosynthesis; chorismate biosynthesis; chorismate from D-erythrose 4-phosphate and phosphoenolpyruvate: step 3/7. The protein operates within metabolic intermediate biosynthesis; chorismate biosynthesis; chorismate from D-erythrose 4-phosphate and phosphoenolpyruvate: step 4/7. It functions in the pathway metabolic intermediate biosynthesis; chorismate biosynthesis; chorismate from D-erythrose 4-phosphate and phosphoenolpyruvate: step 5/7. It participates in metabolic intermediate biosynthesis; chorismate biosynthesis; chorismate from D-erythrose 4-phosphate and phosphoenolpyruvate: step 6/7. The AROM polypeptide catalyzes 5 consecutive enzymatic reactions in prechorismate polyaromatic amino acid biosynthesis. This chain is Pentafunctional AROM polypeptide, found in Phaeosphaeria nodorum (strain SN15 / ATCC MYA-4574 / FGSC 10173) (Glume blotch fungus).